Reading from the N-terminus, the 586-residue chain is Arginine--tRNA ligase (586 aa).

The short motif at 131–141 is the 'HIGH' region element; it reads ANPTGPLHVGH.

The protein belongs to the class-I aminoacyl-tRNA synthetase family. Monomer.

The protein resides in the cytoplasm. It carries out the reaction tRNA(Arg) + L-arginine + ATP = L-arginyl-tRNA(Arg) + AMP + diphosphate. In Nitrosomonas europaea (strain ATCC 19718 / CIP 103999 / KCTC 2705 / NBRC 14298), this protein is Arginine--tRNA ligase.